A 142-amino-acid chain; its full sequence is Transcriptional regulator MraZ (142 aa).

SpoVT-AbrB domains follow at residues 5–51 (ASAL…PRPE) and 77–120 (AMDV…DAQT).

The protein belongs to the MraZ family. As to quaternary structure, forms oligomers.

The protein localises to the cytoplasm. The protein resides in the nucleoid. The polypeptide is Transcriptional regulator MraZ (Paraburkholderia xenovorans (strain LB400)).